Reading from the N-terminus, the 455-residue chain is MSFVPGQENAGSRSSSGNRAGNGILKKTTWADQTERGLNNQNRGRKNQPKQTATTQPNSGSVVPHYSWFSGITQFQKGKEFQFAQGQGVPIANGIPASQQKGYWYRHNRRSFKTPDGQQKQLLPRWYFYYLGTGPYAGAEYGDDIEGVVWVASQQAETRTSADIVERDPSSHEAIPTRFAPGTVLPQGFYVEGSGRSAPASRSGSRPQSRGPNNRARSSSNQRQPASTVKPDMAEEIAALVLAKLGKDAGQPKQVTKQSAKEVRQKILNKPRQKRTPNKQCPVQQCFGKRGPNQNFGGPEMLKLGTSDPQFPILAELAPTAGAFFFGSKLELVKKNSGGADGPTKDVYELQYSGAVRFDSTLPGFETIMKVLNENLNAYQNQDGGADVVSPKPQRKRGTKQKAQKDEVDNVSVAKPKSSVQRNVSRELTPEDRSLLAQILDDGVVPDGLEDDSNV.

The interval 1-62 (MSFVPGQENA…ATTQPNSGSV (62 aa)) is disordered. Residues 9–23 (NAGSRSSSGNRAGNG) show a composition bias toward low complexity. Polar residues-rich tracts occupy residues 30-42 (WADQTERGLNNQN) and 49-61 (PKQTATTQPNSGS). The RNA-binding stretch occupies residues 56–197 (QPNSGSVVPH…GFYVEGSGRS (142 aa)). Positions 64-193 (PHYSWFSGIT…VLPQGFYVEG (130 aa)) constitute a CoV N NTD domain. Arg-109, Arg-125, and Arg-167 together coordinate RNA. Disordered regions lie at residues 159 to 230 (RTSA…STVK), 271 to 290 (PRQKRTPNKQCPVQQCFGKR), and 382 to 429 (QDGG…RELT). Ser-170 carries the phosphoserine; by host modification. Thr-177 is modified (phosphothreonine; by host). The segment covering 193 to 212 (GSGRSAPASRSGSRPQSRGP) has biased composition (low complexity). Position 194 is a phosphoserine; by host (Ser-194). Polar residues predominate over residues 215-227 (RARSSSNQRQPAS). Residues 260-383 (AKEVRQKILN…ENLNAYQNQD (124 aa)) form the CoV N CTD domain. A dimerization region spans residues 267–384 (ILNKPRQKRT…NLNAYQNQDG (118 aa)). The residue at position 390 (Ser-390) is a Phosphoserine; by host. The segment covering 393–402 (PQRKRGTKQK) has biased composition (basic residues). Ser-425 carries the post-translational modification Phosphoserine; by host. Position 429 is a phosphothreonine; by host (Thr-429).

Belongs to the betacoronavirus nucleocapsid protein family. As to quaternary structure, homooligomer. Both monomeric and oligomeric forms interact with RNA. Interacts with protein M. Interacts with NSP3; this interaction serves to tether the genome to the newly translated replicase-transcriptase complex at a very early stage of infection. Interacts (when phosphorylated) with host DDX1; this interaction is essential to produce a full set of subgenomic and genomic RNAs. ADP-ribosylated. The ADP-ribosylation is retained in the virion during infection. Post-translationally, phosphorylated on serine and threonine residues. Phosphorylated by host GSK3A and GSK3B. Phosphorylation allows recruitment of host RNA helicase DDX1 which facilitates template readthrough and enables longer subgenomic mRNA synthesis.

The protein localises to the virion. Its subcellular location is the host endoplasmic reticulum-Golgi intermediate compartment. It localises to the host Golgi apparatus. Functionally, packages the positive strand viral genome RNA into a helical ribonucleocapsid (RNP) and plays a fundamental role during virion assembly through its interactions with the viral genome and membrane protein M. Plays an important role in enhancing the efficiency of subgenomic viral RNA transcription as well as viral replication. The polypeptide is Nucleoprotein (Murine coronavirus (strain JHM) (MHV-JHM)).